We begin with the raw amino-acid sequence, 332 residues long: Ribosomal RNA small subunit methyltransferase H (332 aa).

S-adenosyl-L-methionine-binding positions include G34–H36, D59, F86, D112, and Q119.

This sequence belongs to the methyltransferase superfamily. RsmH family.

It localises to the cytoplasm. The catalysed reaction is cytidine(1402) in 16S rRNA + S-adenosyl-L-methionine = N(4)-methylcytidine(1402) in 16S rRNA + S-adenosyl-L-homocysteine + H(+). Functionally, specifically methylates the N4 position of cytidine in position 1402 (C1402) of 16S rRNA. This chain is Ribosomal RNA small subunit methyltransferase H, found in Chlorobium phaeobacteroides (strain BS1).